A 333-amino-acid chain; its full sequence is Chemokine XC receptor 1 (333 aa).

Residues 1–31 (MESSGNPESTTFFYYDLQSQPCENQAWVFAT) are Extracellular-facing. Residues 32 to 59 (LATTVLYCLVFLLSLVGNSLVLWVLVKY) form a helical membrane-spanning segment. Residues 60–69 (ESLESLTNIF) are Cytoplasmic-facing. Residues 70-89 (ILNLCLSDLVFACLLPVWIS) traverse the membrane as a helical segment. At 90 to 103 (PYHWGWVLGDFLCK) the chain is on the extracellular side. A disulfide bridge connects residues Cys102 and Cys175. A helical transmembrane segment spans residues 104 to 125 (LLNMIFSISLYSSIFFLTIMTI). Residues 126–142 (HRYLSVVSPLSTLRVPT) are Cytoplasmic-facing. The chain crosses the membrane as a helical span at residues 143–167 (LRCRVLVTMAVWVASILSSILDTIF). Residues 168–190 (HKVLSSGCDYSELTWYLTSVYQH) are Extracellular-facing. The helical transmembrane segment at 191-209 (NLFFLLSLGIILFCYVEIL) threads the bilayer. The Cytoplasmic portion of the chain corresponds to 210–225 (RTLFRSRSKRRHRTVK). A helical membrane pass occupies residues 226–250 (LIFAIVVAYFLSWGPYNFTLFLQTL). Residues 251–267 (FRTQIIRSCEAKQQLEY) are Extracellular-facing. A helical transmembrane segment spans residues 268–291 (ALLICRNLAFSHCCFNPVLYVFVG). The Cytoplasmic segment spans residues 292-333 (VKFRTHLKHVLRQFWFCRLQAPSPASIPHSPGAFAYEGASFY).

This sequence belongs to the G-protein coupled receptor 1 family.

It is found in the cell membrane. Functionally, receptor for chemokines SCYC1 and SCYC2. Subsequently transduces a signal by increasing the intracellular calcium ions level. Receptor for XCL1/Lymphotactin. In Homo sapiens (Human), this protein is Chemokine XC receptor 1 (XCR1).